The following is a 376-amino-acid chain: tRNA-specific 2-thiouridylase MnmA (376 aa).

ATP contacts are provided by residues 16–23 (AMSGGVDS) and Leu-42. Cys-111 serves as the catalytic Nucleophile. A disulfide bond links Cys-111 and Cys-210. Gly-135 contributes to the ATP binding site. The tract at residues 158–160 (KDQ) is interaction with tRNA. Cys-210 acts as the Cysteine persulfide intermediate in catalysis.

Belongs to the MnmA/TRMU family.

The protein localises to the cytoplasm. The enzyme catalyses S-sulfanyl-L-cysteinyl-[protein] + uridine(34) in tRNA + AH2 + ATP = 2-thiouridine(34) in tRNA + L-cysteinyl-[protein] + A + AMP + diphosphate + H(+). Its function is as follows. Catalyzes the 2-thiolation of uridine at the wobble position (U34) of tRNA, leading to the formation of s(2)U34. The polypeptide is tRNA-specific 2-thiouridylase MnmA (Streptomyces avermitilis (strain ATCC 31267 / DSM 46492 / JCM 5070 / NBRC 14893 / NCIMB 12804 / NRRL 8165 / MA-4680)).